The primary structure comprises 301 residues: tRNA dimethylallyltransferase (301 aa).

G9–S16 provides a ligand contact to ATP. A substrate-binding site is contributed by T11–S16. Positions D34–Q37 are interaction with substrate tRNA.

Belongs to the IPP transferase family. In terms of assembly, monomer. Requires Mg(2+) as cofactor.

It carries out the reaction adenosine(37) in tRNA + dimethylallyl diphosphate = N(6)-dimethylallyladenosine(37) in tRNA + diphosphate. Its function is as follows. Catalyzes the transfer of a dimethylallyl group onto the adenine at position 37 in tRNAs that read codons beginning with uridine, leading to the formation of N6-(dimethylallyl)adenosine (i(6)A). This is tRNA dimethylallyltransferase from Corynebacterium glutamicum (strain ATCC 13032 / DSM 20300 / JCM 1318 / BCRC 11384 / CCUG 27702 / LMG 3730 / NBRC 12168 / NCIMB 10025 / NRRL B-2784 / 534).